The following is a 487-amino-acid chain: L-tartrate/succinate antiporter (487 aa).

A run of 14 helical transmembrane segments spans residues 10-30, 33-53, 54-74, 93-113, 137-157, 189-209, 236-256, 292-312, 313-333, 340-360, 370-390, 393-413, 418-438, and 462-482; these read YLAP…AGLE, TWLY…EPVP, GAVV…WLLF, WAVS…FMFG, TLFL…VTPS, IGSY…AIFL, FLGM…LAYV, LMVG…AAMV, GYSV…DIVS, VFFW…TGFI, SLSG…FYLL, FFAS…AAAL, IPLP…SILT, and LGAI…LLWM.

It belongs to the SLC13A/DASS transporter (TC 2.A.47) family. DIT1 subfamily.

The protein resides in the cell inner membrane. It catalyses the reaction (2R,3R)-tartrate(out) + succinate(in) = (2R,3R)-tartrate(in) + succinate(out). In terms of biological role, catalyzes the uptake of tartrate in exchange for intracellular succinate. Essential for anaerobic L-tartrate fermentation. The protein is L-tartrate/succinate antiporter (ttdT) of Escherichia coli O6:H1 (strain CFT073 / ATCC 700928 / UPEC).